Here is a 154-residue protein sequence, read N- to C-terminus: MIITTWIVYILARKGAGLPFPPKVSSDVEVTETEAVSVVQHWLKKTEEEASQEIKEKMSTNFPPMQGQDVHVTRDVVKHHLSKSGLLANQSQEVLEERTRIQFIRWSHTRIFQVPSEARNEAMRDRIEQVRRSICHLSDEISQELRNRNSYSEC.

Residues 1–24 (MIITTWIVYILARKGAGLPFPPKV) constitute a mitochondrion transit peptide. S26 and S116 each carry phosphoserine.

The protein resides in the mitochondrion outer membrane. It is found in the mitochondrion. It localises to the cell projection. Its subcellular location is the cilium. The protein localises to the flagellum. Essential for sperm motility and male fertility. Plays an important role in sperm motility by regulating the organization and function of the mitochondria and is also required for correct sperm midpiece assembly. The polypeptide is Spermatogenesis-associated protein 19, mitochondrial (SPATA19) (Bos taurus (Bovine)).